The sequence spans 454 residues: Glutamyl-tRNA reductase (454 aa).

Substrate is bound by residues 49-52, S109, 114-116, and Q120; these read TCNR and ETQ. Catalysis depends on C50, which acts as the Nucleophile. Residue 189-194 coordinates NADP(+); the sequence is GAGKMG.

The protein belongs to the glutamyl-tRNA reductase family. As to quaternary structure, homodimer.

The catalysed reaction is (S)-4-amino-5-oxopentanoate + tRNA(Glu) + NADP(+) = L-glutamyl-tRNA(Glu) + NADPH + H(+). Its pathway is porphyrin-containing compound metabolism; protoporphyrin-IX biosynthesis; 5-aminolevulinate from L-glutamyl-tRNA(Glu): step 1/2. In terms of biological role, catalyzes the NADPH-dependent reduction of glutamyl-tRNA(Glu) to glutamate 1-semialdehyde (GSA). The protein is Glutamyl-tRNA reductase of Geobacillus kaustophilus (strain HTA426).